The chain runs to 209 residues: MNNLSPLEVAIADFQAAKTTPELIRATKNLCDLRTIEAIPILIEGLGFNNPAVASVATSGLIELGSQAVPSLLVSLDEKNYGSRAWVVRALASIRDPRSLDLLEHALATDIAPSVRRSAARGLAELNLIYPEDRSKLERCLLALLAAIKDDEWVVRYAVIFGIELHLRRYNPNNKNHCILALKQLSSDSESIKVIRLRAKLALQRLASS.

This sequence belongs to the CpcE/RpcE/PecE family.

In terms of biological role, an enzyme involved in the biosynthesis of bilin. Might be involved in the specific attachment of phycoerythrobilin (PEB) to the R-phycocyanin II alpha chain. The sequence is that of Bilin biosynthesis protein RpcF (rpcF) from Synechococcus sp. (strain WH8020).